Here is a 319-residue protein sequence, read N- to C-terminus: Malate dehydrogenase (319 aa).

NAD(+) contacts are provided by residues 10–15 (GAGNIG) and aspartate 34. Substrate-binding residues include arginine 83 and arginine 89. Residues asparagine 96 and 119-121 (ITN) each bind NAD(+). Substrate-binding residues include asparagine 121 and arginine 152. Histidine 176 acts as the Proton acceptor in catalysis.

The protein belongs to the LDH/MDH superfamily. MDH type 3 family.

It catalyses the reaction (S)-malate + NAD(+) = oxaloacetate + NADH + H(+). Catalyzes the reversible oxidation of malate to oxaloacetate. This is Malate dehydrogenase from Francisella philomiragia subsp. philomiragia (strain ATCC 25017 / CCUG 19701 / FSC 153 / O#319-036).